A 466-amino-acid chain; its full sequence is Anthocyanidin 3-O-glucosyltransferase 1 (466 aa).

His22 acts as the Proton acceptor in catalysis. An anthocyanidin contacts are provided by His22 and Gln87. Catalysis depends on Asp122, which acts as the Charge relay. Thr145 serves as a coordination point for UDP-alpha-D-glucose. His154 is a binding site for an anthocyanidin. Residues Ala346, Gln348, His363, Trp366, Asn367, Ser368, and Glu371 each contribute to the UDP-alpha-D-glucose site. Gly386 lines the an anthocyanidin pocket. The UDP-alpha-D-glucose site is built by Asp387 and Gln388.

Belongs to the UDP-glycosyltransferase family. Highest expression detected in receptacles and achenes, with very low levels detected in runners, leaves, flowers, crowns and green receptacles.

The catalysed reaction is an anthocyanidin + UDP-alpha-D-glucose + H(+) = an anthocyanidin 3-O-beta-D-glucoside + UDP. The enzyme catalyses cyanidin + UDP-alpha-D-glucose = cyanidin 3-O-beta-D-glucoside + UDP + H(+). It carries out the reaction pelargonidin + UDP-alpha-D-glucose = pelargonidin 3-O-beta-D-glucoside + UDP. It catalyses the reaction peonidin + UDP-alpha-D-glucose = peonidin 3-O-beta-D-glucoside + UDP. The catalysed reaction is delphinidin + UDP-alpha-D-glucose = delphinidin 3-O-beta-D-glucoside + UDP. The enzyme catalyses a flavonol + UDP-alpha-D-glucose = a flavonol 3-O-beta-D-glucoside + UDP + H(+). Its pathway is pigment biosynthesis; anthocyanin biosynthesis. Its function is as follows. In the presence of other necessary color factors, this glycosylation reaction allows the accumulation of anthocyanin pigments. Uses UDP-Glc as a sugar donor, but not UDP-Gal or UDP-GlcUA. Anthocyanidins are the preferred substrates in vivo, but flavonols can also be glucosylated in vitro. The polypeptide is Anthocyanidin 3-O-glucosyltransferase 1 (Fragaria ananassa (Strawberry)).